The following is a 765-amino-acid chain: Probable exo-1,4-beta-xylosidase bxlB (765 aa).

The signal sequence occupies residues 1 to 25 (MYSSNSRRAASILACIVSLTQLGFA). N-linked (GlcNAc...) asparagine glycosylation is found at Asn67 and Asn107. Asp293 is an active-site residue. 5 N-linked (GlcNAc...) asparagine glycosylation sites follow: Asn345, Asn412, Asn423, Asn464, and Asn761.

This sequence belongs to the glycosyl hydrolase 3 family.

Its subcellular location is the secreted. It carries out the reaction Hydrolysis of (1-&gt;4)-beta-D-xylans, to remove successive D-xylose residues from the non-reducing termini.. It functions in the pathway glycan degradation; xylan degradation. Xylan 1,4-beta-xylosidase involved in the hydrolysis of xylan, a major structural heterogeneous polysaccharide found in plant biomass representing the second most abundant polysaccharide in the biosphere, after cellulose. In Aspergillus terreus (strain NIH 2624 / FGSC A1156), this protein is Probable exo-1,4-beta-xylosidase bxlB (bxlB).